The sequence spans 119 residues: Protein TusC (119 aa).

It belongs to the DsrF/TusC family. As to quaternary structure, heterohexamer, formed by a dimer of trimers. The hexameric TusBCD complex contains 2 copies each of TusB, TusC and TusD. The TusBCD complex interacts with TusE.

The protein localises to the cytoplasm. Its function is as follows. Part of a sulfur-relay system required for 2-thiolation of 5-methylaminomethyl-2-thiouridine (mnm(5)s(2)U) at tRNA wobble positions. This chain is Protein TusC, found in Pectobacterium atrosepticum (strain SCRI 1043 / ATCC BAA-672) (Erwinia carotovora subsp. atroseptica).